Here is a 537-residue protein sequence, read N- to C-terminus: Nedd4 binding protein 3 (537 aa).

The residue at position 172 (S172) is a Phosphoserine. Disordered stretches follow at residues 173 to 234 (LDEG…VLSC), 327 to 359 (RKEL…EEEA), and 422 to 456 (LQEQ…EARE). The span at 178 to 207 (PEPSLSDSSSGGSFGRSPGTGPSPFSSSLG) shows a compositional bias: low complexity. Residues 295 to 523 (VDRLHEVAQK…LEQELRVLRE (229 aa)) adopt a coiled-coil conformation.

The protein belongs to the N4BP3 family. As to quaternary structure, binds NEDD4. Interacts with 14-3-3 proteins. Interacts with MAVS.

The protein resides in the cytoplasmic vesicle. The protein localises to the cell projection. It localises to the axon. It is found in the dendrite. In terms of biological role, plays a positive role in the antiviral innate immune signaling pathway. Mechanistically, interacts with MAVS and functions as a positive regulator to promote 'Lys-63'-linked polyubiquitination of MAVS and thus strengthens the interaction between MAVS and TRAF2. Also plays a role in axon and dendrite arborization during cranial nerve development. May also be important for neural crest migration and early development of other anterior structures including eye, brain and cranial cartilage. In Rattus norvegicus (Rat), this protein is Nedd4 binding protein 3.